The sequence spans 851 residues: Protein FAM13B (851 aa).

The Rho-GAP domain occupies 23–212; that stretch reads IPLDELQQGG…GLLENYYEFF (190 aa). Residues 556–565 are compositionally biased toward basic and acidic residues; the sequence is IKDAKHKNSD. Residues 556 to 611 form a disordered region; it reads IKDAKHKNSDGEFAPQTRPRSNTLPKSFGSSLDHEDGESEGEPRVIQKEKTPSKEA. Residues 573-585 show a composition bias toward polar residues; the sequence is RPRSNTLPKSFGS. Positions 596-611 are enriched in basic and acidic residues; it reads GEPRVIQKEKTPSKEA.

Belongs to the FAM13 family.

The sequence is that of Protein FAM13B (Fam13b) from Mus musculus (Mouse).